The following is a 44-amino-acid chain: uncharacterized protein (44 aa).

This is an uncharacterized protein from Escherichia coli (strain K12).